Here is a 289-residue protein sequence, read N- to C-terminus: Shikimate kinase (289 aa).

ATP is bound at residue 84–94; it reads PMASGLSSSSA.

The protein belongs to the GHMP kinase family. Archaeal shikimate kinase subfamily.

Its subcellular location is the cytoplasm. The enzyme catalyses shikimate + ATP = 3-phosphoshikimate + ADP + H(+). It participates in metabolic intermediate biosynthesis; chorismate biosynthesis; chorismate from D-erythrose 4-phosphate and phosphoenolpyruvate: step 5/7. This is Shikimate kinase from Methanobrevibacter smithii (strain ATCC 35061 / DSM 861 / OCM 144 / PS).